The chain runs to 397 residues: Ribosomal RNA large subunit methyltransferase I (397 aa).

The PUA domain maps to threonine 2–valine 79.

Belongs to the methyltransferase superfamily. RlmI family.

Its subcellular location is the cytoplasm. The catalysed reaction is cytidine(1962) in 23S rRNA + S-adenosyl-L-methionine = 5-methylcytidine(1962) in 23S rRNA + S-adenosyl-L-homocysteine + H(+). Functionally, specifically methylates the cytosine at position 1962 (m5C1962) of 23S rRNA. The polypeptide is Ribosomal RNA large subunit methyltransferase I (Vibrio campbellii (strain ATCC BAA-1116)).